Reading from the N-terminus, the 153-residue chain is Small ribosomal subunit protein uS17 (153 aa).

Belongs to the universal ribosomal protein uS17 family.

This chain is Small ribosomal subunit protein uS17 (RpS11), found in Anopheles gambiae (African malaria mosquito).